Consider the following 203-residue polypeptide: Histidine biosynthesis bifunctional protein HisIE (203 aa).

Residues 1-108 are phosphoribosyl-AMP cyclohydrolase; it reads MELDFDKMNG…GEKNEEPVMF (108 aa). The segment at 109–203 is phosphoribosyl-ATP pyrophosphohydrolase; that stretch reads LKALQDFIDK…ERHSSTWKKH (95 aa).

In the N-terminal section; belongs to the PRA-CH family. It in the C-terminal section; belongs to the PRA-PH family.

It is found in the cytoplasm. The catalysed reaction is 1-(5-phospho-beta-D-ribosyl)-ATP + H2O = 1-(5-phospho-beta-D-ribosyl)-5'-AMP + diphosphate + H(+). The enzyme catalyses 1-(5-phospho-beta-D-ribosyl)-5'-AMP + H2O = 1-(5-phospho-beta-D-ribosyl)-5-[(5-phospho-beta-D-ribosylamino)methylideneamino]imidazole-4-carboxamide. The protein operates within amino-acid biosynthesis; L-histidine biosynthesis; L-histidine from 5-phospho-alpha-D-ribose 1-diphosphate: step 2/9. It functions in the pathway amino-acid biosynthesis; L-histidine biosynthesis; L-histidine from 5-phospho-alpha-D-ribose 1-diphosphate: step 3/9. This Bacteroides thetaiotaomicron (strain ATCC 29148 / DSM 2079 / JCM 5827 / CCUG 10774 / NCTC 10582 / VPI-5482 / E50) protein is Histidine biosynthesis bifunctional protein HisIE.